Reading from the N-terminus, the 216-residue chain is Large ribosomal subunit protein uL24m (216 aa).

The N-terminal 9 residues, 1–9 (MRLTALLSM), are a transit peptide targeting the mitochondrion. The KOW domain maps to 56 to 89 (VVRGDTVEVLSGKEKGKQGKVAQVIRARNWVILE). Residues 167-186 (PQQWKDGPKDTSPEDTLQKT) form a disordered region.

Belongs to the universal ribosomal protein uL24 family. Component of the mitochondrial ribosome large subunit (39S) which comprises a 16S rRNA and about 50 distinct proteins.

Its subcellular location is the mitochondrion. The sequence is that of Large ribosomal subunit protein uL24m (mrpl24) from Danio rerio (Zebrafish).